An 80-amino-acid chain; its full sequence is Clavanin-A (80 aa).

An N-terminal signal peptide occupies residues Met1 to Ser19. A propeptide spanning residues Leu20–Lys29 is cleaved from the precursor. A Phenylalanine amide modification is found at Phe52. The propeptide occupies Asp54 to Gln80.

Its subcellular location is the secreted. In terms of biological role, has antimicrobial activity. The chain is Clavanin-A from Styela clava (Sea squirt).